The following is a 66-amino-acid chain: Sodium channel alpha-toxin Acra8 (66 aa).

The LCN-type CS-alpha/beta domain maps to 2–64 (RDGYIVDDKN…VPIKEKGRCN (63 aa)). Intrachain disulfides connect cysteine 12–cysteine 63, cysteine 16–cysteine 36, cysteine 22–cysteine 46, and cysteine 26–cysteine 48. Asparagine 64 carries the post-translational modification Asparagine amide. Positions 65–66 (GR) are excised as a propeptide.

The protein belongs to the long (4 C-C) scorpion toxin superfamily. Sodium channel inhibitor family. Alpha subfamily. Expressed by the venom gland.

The protein localises to the secreted. Functionally, alpha toxins bind voltage-independently at site-3 of sodium channels (Nav) and inhibit the inactivation of the activated channels, thereby blocking neuronal transmission. The protein is Sodium channel alpha-toxin Acra8 of Androctonus crassicauda (Arabian fat-tailed scorpion).